The sequence spans 692 residues: MDTFPSLFPPGGDSRLNPEPEFQNMLIDERVRCEHHKHNYQALKIEHKRLQEEYVKSQNELKRVLIEKQASQEKFQLLLEDLRGELVEKARDIEKMKLQVLTPQKLELVKAQLQQELEAPMRERFRTLDEEVERYRAEYNKLRYEYTFLKSEFEHQKEEFTRVSEEEKMKYKSEVARLEKDKEELHNQLLSVDPTRDSKRMEQLVREKTHLLQKLKSLEAEVAELRAEKENSGAQVENVQRIQVRQLAEMQATLRSLEAEKQSAKLQAERLEKELQSSNEQNTCLISKLHRADREISTLASEVKELKHANKLEITDIKLEAARAKSELERERNKIQSELDGLQSDNEILKSTVEHHKALLVEKDRELIRKVQAAKEEGYQKLMVLQDEKLELENRLSDLEKMKVERDVWRQSEKEQCEEKLRASQMAEEAARRELQSTRLKLQQQIVNTEKAEKEKLENSELKQQISHLQIQVTSLTQSENDLLNSNHMLKDMVERLKQECRNLRSQAEKAQLDVEKTLEEKQIQWLEEKHKLHERITDREEKYNQAKEKLQRAATAQKKRKSLHENKLKRLQEKVEVLEAKKEELETENQVLNRQNVPFEEYTRLQKRLKDIQRRHNEFRSLILVPNMPPTASISPANFQSAVTVPGAELSFPPHLQEEQHQRELSLLRKRLEELETTQRKQLEELGSPGE.

Coiled-coil stretches lie at residues 32 to 625 (RCEH…SLIL) and 656 to 689 (HLQE…ELGS). S689 is subject to Phosphoserine.

The protein belongs to the CEP83 family. As to quaternary structure, interacts with CEP164 and IFT20.

It is found in the cytoplasm. The protein localises to the cytoskeleton. The protein resides in the microtubule organizing center. It localises to the centrosome. Its subcellular location is the centriole. Functionally, component of the distal appendage region of the centriole involved in the initiation of primary cilium assembly. May collaborate with IFT20 in the trafficking of ciliary membrane proteins from the Golgi complex to the cilium during the initiation of primary cilium assembly. This chain is Centrosomal protein of 83 kDa (Cep83), found in Mus musculus (Mouse).